The primary structure comprises 259 residues: ATP synthase subunit b 3 (259 aa).

A helical membrane pass occupies residues 5 to 27 (WWTLGLQAINVLILIWILSRFLF).

The protein belongs to the ATPase B chain family. In terms of assembly, F-type ATPases have 2 components, F(1) - the catalytic core - and F(0) - the membrane proton channel. F(1) has five subunits: alpha(3), beta(3), gamma(1), delta(1), epsilon(1). F(0) has three main subunits: a(1), b(2) and c(10-14). The alpha and beta chains form an alternating ring which encloses part of the gamma chain. F(1) is attached to F(0) by a central stalk formed by the gamma and epsilon chains, while a peripheral stalk is formed by the delta and b chains.

The protein resides in the cell inner membrane. Its function is as follows. F(1)F(0) ATP synthase produces ATP from ADP in the presence of a proton or sodium gradient. F-type ATPases consist of two structural domains, F(1) containing the extramembraneous catalytic core and F(0) containing the membrane proton channel, linked together by a central stalk and a peripheral stalk. During catalysis, ATP synthesis in the catalytic domain of F(1) is coupled via a rotary mechanism of the central stalk subunits to proton translocation. In terms of biological role, component of the F(0) channel, it forms part of the peripheral stalk, linking F(1) to F(0). The polypeptide is ATP synthase subunit b 3 (Beijerinckia indica subsp. indica (strain ATCC 9039 / DSM 1715 / NCIMB 8712)).